Reading from the N-terminus, the 170-residue chain is Small ribosomal subunit protein uS5 (170 aa).

Residues 12–75 (WSELLVSVRR…NAAKKSMIRV (64 aa)) form the S5 DRBM domain.

Belongs to the universal ribosomal protein uS5 family. In terms of assembly, part of the 30S ribosomal subunit. Contacts proteins S4 and S8.

Functionally, with S4 and S12 plays an important role in translational accuracy. In terms of biological role, located at the back of the 30S subunit body where it stabilizes the conformation of the head with respect to the body. The protein is Small ribosomal subunit protein uS5 of Wolbachia sp. subsp. Brugia malayi (strain TRS).